The sequence spans 641 residues: Threonine--tRNA ligase (641 aa).

A TGS domain is found at 1–61; sequence MIKINLLNHQ…TQDGDLEILA (61 aa). The catalytic stretch occupies residues 240-538; it reads DHKRLNKKLD…LIEENKGVFP (299 aa). Residues cysteine 334, histidine 385, and histidine 515 each contribute to the Zn(2+) site.

This sequence belongs to the class-II aminoacyl-tRNA synthetase family. Homodimer. Zn(2+) is required as a cofactor.

It is found in the cytoplasm. The catalysed reaction is tRNA(Thr) + L-threonine + ATP = L-threonyl-tRNA(Thr) + AMP + diphosphate + H(+). Functionally, catalyzes the attachment of threonine to tRNA(Thr) in a two-step reaction: L-threonine is first activated by ATP to form Thr-AMP and then transferred to the acceptor end of tRNA(Thr). Also edits incorrectly charged L-seryl-tRNA(Thr). The chain is Threonine--tRNA ligase from Phytoplasma australiense.